The sequence spans 188 residues: MPVKKRVPFVAFRTRVRDETIGGPNPYRWEVRTTEDYFSGKRVVLFSLPGAFTPTCSTQQLPDFERLYDEFGKVGIEAVYCLSVNDAFVMNAWGKALGLEKVRLIPDGSGEFTRKMGMLVAKDNLGFGMRSWRYAAVVNDSVVEQWFEEEGFSDNCESDPYWASSPQNILETLRTFDTARLGRVPIKF.

The Thioredoxin domain maps to 2–152; it reads PVKKRVPFVA…VEQWFEEEGF (151 aa). Catalysis depends on C56, which acts as the Cysteine sulfenic acid (-SOH) intermediate (for peroxiredoxin activity).

Belongs to the peroxiredoxin family. Prx5 subfamily. In terms of assembly, monomer.

It catalyses the reaction a hydroperoxide + 2 glutathione = an alcohol + glutathione disulfide + H2O. Functionally, thiol-specific peroxidase that catalyzes the reduction of hydrogen peroxide and organic hydroperoxides to water and alcohols, respectively. Plays a role in cell protection against oxidative stress by detoxifying peroxides. This chain is Peroxiredoxin y4vD, found in Sinorhizobium fredii (strain NBRC 101917 / NGR234).